Consider the following 127-residue polypeptide: Copper resistance protein C (127 aa).

The N-terminal stretch at 1-25 is a signal peptide; that stretch reads MFAFRSIATTVVMVAASLASASAFA. Positions 26, 65, 68, 71, 76, and 116 each coordinate Cu cation.

This sequence belongs to the CopC family.

It is found in the periplasm. Copper-binding protein involved in copper resistance. The protein is Copper resistance protein C of Xanthomonas campestris pv. juglandis (Xanthomonas arboricola pv. juglandis).